The primary structure comprises 223 residues: Chalcone--flavanone isomerase (223 aa).

Substrate contacts are provided by threonine 50, asparagine 114, and threonine 191.

It belongs to the chalcone isomerase family.

The enzyme catalyses a chalcone = a flavanone.. It participates in secondary metabolite biosynthesis; flavonoid biosynthesis. Catalyzes the intramolecular cyclization of bicyclic chalcones into tricyclic (S)-flavanones. Responsible for the isomerization of 4,2',4',6'-tetrahydroxychalcone (also termed chalcone) into naringenin. The polypeptide is Chalcone--flavanone isomerase (CHI) (Pisum sativum (Garden pea)).